The following is a 31-amino-acid chain: Cyclotide vinc-B (31 aa).

Positions 1 to 31 form a cross-link, cyclopeptide (Gly-Asn); the sequence is GSIPACGESCFKGKCYTPGCTCSKYPLCAKN. 3 cysteine pairs are disulfide-bonded: cysteine 6/cysteine 20, cysteine 10/cysteine 22, and cysteine 15/cysteine 28.

Belongs to the cyclotide family. In terms of processing, this is a cyclic peptide.

In terms of biological role, probably participates in a plant defense mechanism. This chain is Cyclotide vinc-B, found in Viola inconspicua.